Here is a 458-residue protein sequence, read N- to C-terminus: Argininosuccinate lyase (458 aa).

It belongs to the lyase 1 family. Argininosuccinate lyase subfamily.

Its subcellular location is the cytoplasm. It catalyses the reaction 2-(N(omega)-L-arginino)succinate = fumarate + L-arginine. Its pathway is amino-acid biosynthesis; L-arginine biosynthesis; L-arginine from L-ornithine and carbamoyl phosphate: step 3/3. The polypeptide is Argininosuccinate lyase (Citrifermentans bemidjiense (strain ATCC BAA-1014 / DSM 16622 / JCM 12645 / Bem) (Geobacter bemidjiensis)).